The primary structure comprises 421 residues: MDKLIITGGARLDGEIRISGAKNSALPILAATLLCDGPVTVANLPHLHDITTMIELFGRMGIEPVIDEKLSVEIDPRTIKTLIAPYELVKTMRASILVLGPMVARFGEAEVALPGGCAIGSRPVDLHIRGLEAMGATIDVEGGYIKAKAPEGGLRGANFFFDTVSVTGTENIMMAAALANGRSVLQNAAREPEVVDLANFLIAMGANITGAGTDTITVDGVKRLHPATYKVMPDRIETGTYLVAAAVTGGRVKVKDTDPTILEAVLEKLREAGAEITTGEDWIELNMHGKRPKAVNVRTAPYPAFPTDMQAQFISLNAIAEGTGAVIETIFENRFMHVYELHRMGAKIQVEGNTAIVTGTEKLKGAPVMATDLRASASLVISALIAEGDTLIDRIYHIDRGYECIEEKLQMLGAKIRRVPG.

Phosphoenolpyruvate is bound at residue 22-23 (KN). UDP-N-acetyl-alpha-D-glucosamine is bound at residue arginine 93. Cysteine 117 functions as the Proton donor in the catalytic mechanism. Cysteine 117 bears the 2-(S-cysteinyl)pyruvic acid O-phosphothioketal mark. Residues 122–126 (RPVDL), aspartate 308, and isoleucine 330 each bind UDP-N-acetyl-alpha-D-glucosamine.

Belongs to the EPSP synthase family. MurA subfamily.

Its subcellular location is the cytoplasm. The enzyme catalyses phosphoenolpyruvate + UDP-N-acetyl-alpha-D-glucosamine = UDP-N-acetyl-3-O-(1-carboxyvinyl)-alpha-D-glucosamine + phosphate. It functions in the pathway cell wall biogenesis; peptidoglycan biosynthesis. In terms of biological role, cell wall formation. Adds enolpyruvyl to UDP-N-acetylglucosamine. The protein is UDP-N-acetylglucosamine 1-carboxyvinyltransferase of Pseudomonas fluorescens (strain SBW25).